Consider the following 258-residue polypeptide: Type III pantothenate kinase (258 aa).

9–16 (DIGNTSVN) contributes to the ATP binding site. Position 110–113 (110–113 (GADR)) interacts with substrate. Asp-112 (proton acceptor) is an active-site residue. Asp-132 is a binding site for K(+). ATP is bound at residue Thr-135. Thr-187 serves as a coordination point for substrate.

This sequence belongs to the type III pantothenate kinase family. Homodimer. It depends on NH4(+) as a cofactor. The cofactor is K(+).

It localises to the cytoplasm. The catalysed reaction is (R)-pantothenate + ATP = (R)-4'-phosphopantothenate + ADP + H(+). It participates in cofactor biosynthesis; coenzyme A biosynthesis; CoA from (R)-pantothenate: step 1/5. Its function is as follows. Catalyzes the phosphorylation of pantothenate (Pan), the first step in CoA biosynthesis. This chain is Type III pantothenate kinase, found in Dehalococcoides mccartyi (strain ATCC BAA-2266 / KCTC 15142 / 195) (Dehalococcoides ethenogenes (strain 195)).